We begin with the raw amino-acid sequence, 132 residues long: Interleukin-5 (132 aa).

Residues 1–19 (MRMLLHLSILTLACVWTFA) form the signal peptide. N-linked (GlcNAc...) asparagine glycosylation is found at Asn-45, Asn-74, and Asn-88.

Belongs to the IL-5 family. In terms of assembly, homodimer; disulfide-linked. Interacts with IL5RA. Interacts with CSF2RB.

It localises to the secreted. Its function is as follows. Homodimeric cytokine expressed predominantly by T-lymphocytes and NK cells that plays an important role in the survival, differentiation, and chemotaxis of eosinophils. Also acts on activated and resting B-cells to induce immunoglobulin production, growth, and differentiation. Mechanistically, exerts its biological effects through a receptor composed of IL5RA subunit and the cytokine receptor common subunit beta/CSF2RB. Binding to the receptor leads to activation of various kinases including LYN, SYK and JAK2 and thereby propagates signals through the RAS-MAPK and JAK-STAT5 pathways respectively. The sequence is that of Interleukin-5 (IL5) from Sigmodon hispidus (Hispid cotton rat).